The chain runs to 372 residues: Cytochrome b (372 aa).

Helical transmembrane passes span 25–45 (FGSMLLTCLALQTSTGFFLAI), 69–90 (WIIQNLHAIGASMFFICIYTHI), 105–125 (WLSGTMLLIMLMATSFFGYVL), and 170–190 (FFALHFILPFMIISLSSIHII). The heme b site is built by histidine 75 and histidine 89. Histidine 174 and histidine 188 together coordinate heme b. Histidine 193 lines the a ubiquinone pocket. The next 4 helical transmembrane spans lie at 218–238 (YKDTLMITAMITSMLIIMSFM), 280–300 (LGGTLALLMSILILTTAPFTH), 312–332 (LTQIMFWTLIVTFITITWSAT), and 339–358 (FIFISQTASIIYFSFFIINP).

Belongs to the cytochrome b family. The cytochrome bc1 complex contains 3 respiratory subunits (MT-CYB, CYC1 and UQCRFS1), 2 core proteins (UQCRC1 and UQCRC2) and probably 6 low-molecular weight proteins. Heme b serves as cofactor.

It is found in the mitochondrion inner membrane. Its function is as follows. Component of the ubiquinol-cytochrome c reductase complex (complex III or cytochrome b-c1 complex) that is part of the mitochondrial respiratory chain. The b-c1 complex mediates electron transfer from ubiquinol to cytochrome c. Contributes to the generation of a proton gradient across the mitochondrial membrane that is then used for ATP synthesis. The sequence is that of Cytochrome b (MT-CYB) from Hydrophis semperi (Lake Taal snake).